A 597-amino-acid polypeptide reads, in one-letter code: Probable potassium transport system protein Kup 1 (597 aa).

10 consecutive transmembrane segments (helical) span residues 23 to 43, 72 to 92, 98 to 118, 143 to 163, 174 to 194, 226 to 246, 273 to 293, 303 to 323, 329 to 349, and 353 to 373; these read GAWLVIPAMLGGAAFLADSVL, LTMMITAVIIVILFAVQSRGT, VFGSVVMVWFAFLAIVGVVAI, ATGLALMGTVFLSTTGAEALY, IYFTWPFIKVALVLNYFGQGA, AVVLSVTAGIIASQALITGAF, LYIPVVNVVLCVATLAVLLLF, YGLALTITMITTTILLGIYLW, FGAVVFTIVFLAIQVLFFAAS, and FLHGGWFTLLLTLAILMIMYT.

It belongs to the HAK/KUP transporter (TC 2.A.72) family.

It localises to the cell membrane. The catalysed reaction is K(+)(in) + H(+)(in) = K(+)(out) + H(+)(out). In terms of biological role, transport of potassium into the cell. Likely operates as a K(+):H(+) symporter. The chain is Probable potassium transport system protein Kup 1 (kup1) from Bifidobacterium longum (strain NCC 2705).